Reading from the N-terminus, the 78-residue chain is MKNLLLTFLVVTIVCLDLGYTLICHRVHGLQTCEPDQKFCFRKTTMFFPNHPVLLMGCTYSCPTEKYSVCCSTDKCNK.

An N-terminal signal peptide occupies residues 1–21 (MKNLLLTFLVVTIVCLDLGYT). 4 cysteine pairs are disulfide-bonded: C24-C40, C33-C58, C62-C70, and C71-C76.

Belongs to the three-finger toxin family. Short-chain subfamily. Expressed by the venom gland.

The protein resides in the secreted. Its function is as follows. This three-finger toxin binds and inhibits the nicotinic acetylcholine receptor (nAChR). In Ophiophagus hannah (King cobra), this protein is Short neurotoxin OH-5.